Reading from the N-terminus, the 729-residue chain is Alpha-galactosidase AgaA (729 aa).

Substrate is bound by residues Asp53, Trp199, 366–367 (DD), Arg443, 476–480 (KWDMN), Cys526, and Asp548. Residue Asp478 is the Nucleophile of the active site. The Proton donor role is filled by Asp548.

This sequence belongs to the glycosyl hydrolase 36 family. As to quaternary structure, homotetramer.

The catalysed reaction is Hydrolysis of terminal, non-reducing alpha-D-galactose residues in alpha-D-galactosides, including galactose oligosaccharides, galactomannans and galactolipids.. Its activity is regulated as follows. Not inhibited by D-galactose or sucrose. Inhibited by pharmaceutical drug 1-deoxygalactonojirimycin. In terms of biological role, hydrolyzes the short-chain alpha-galactosaccharides raffinose and stachyose. This Geobacillus stearothermophilus (Bacillus stearothermophilus) protein is Alpha-galactosidase AgaA.